A 431-amino-acid chain; its full sequence is Serine/threonine-protein kinase Sgk1 (431 aa).

The tract at residues 1–60 (MTVKAEAARSTLTYSRMRGMVAILIAFMKQRRMGLNDFIQKIASNTYACKHAEVQSILKM) is necessary for localization to the mitochondria. The interval 65–92 (EPELMNANPSPPPSPSQQINLGPSSNPH) is disordered. Ser74 carries the post-translational modification Phosphoserine. Position 78 is a phosphoserine; by MAPK7 (Ser78). Residues 81 to 91 (QQINLGPSSNP) show a composition bias toward polar residues. The 258-residue stretch at 98-355 (FHFLKVIGKG…FMEIKSHIFF (258 aa)) folds into the Protein kinase domain. Residues 104–112 (IGKGSFGKV) and Lys127 contribute to the ATP site. The Nuclear localization signal signature appears at 131–141 (KKAILKKKEEK). Asp222 functions as the Proton acceptor in the catalytic mechanism. At Thr256 the chain carries Phosphothreonine; by PDPK1. The region spanning 356–431 (SLINWDDLIN…SYAPPVDSFL (76 aa)) is the AGC-kinase C-terminal domain. Thr369 is modified (phosphothreonine; by PKA). Residues Ser397, Ser401, and Ser422 each carry the phosphoserine modification.

It belongs to the protein kinase superfamily. AGC Ser/Thr protein kinase family. In terms of assembly, homodimer; disulfide-linked. Interacts with MAPK3/ERK1, MAPK1/ERK2, MAP2K1/MEK1, MAP2K2/MEK2, NEDD4, NEDD4L, MAPT/TAU, MAPK7, CREB1, SLC9A3R2/NHERF2 and KCNJ1/ROMK1. Forms a trimeric complex with FBXW7 and NOTCH1 Associates with the mammalian target of rapamycin complex 2 (mTORC2) via an interaction with MAPKAP1/SIN1. Regulated by phosphorylation. Activated by phosphorylation on Ser-422 by mTORC2, transforming it into a substrate for PDPK1 which phosphorylates it on Thr-256. Phosphorylation on Ser-397 and Ser-401 are also essential for its activity. Phosphorylation on Ser-78 by MAPK7 is required for growth factor-induced cell cycle progression. Post-translationally, ubiquitinated by NEDD4L; which promotes proteasomal degradation. Ubiquitinated by SYVN1 at the endoplasmic reticulum; which promotes rapid proteasomal degradation and maintains a high turnover rate in resting cells.

Its subcellular location is the cytoplasm. It localises to the nucleus. The protein resides in the endoplasmic reticulum membrane. It is found in the cell membrane. The protein localises to the mitochondrion. The enzyme catalyses L-seryl-[protein] + ATP = O-phospho-L-seryl-[protein] + ADP + H(+). It carries out the reaction L-threonyl-[protein] + ATP = O-phospho-L-threonyl-[protein] + ADP + H(+). Its activity is regulated as follows. Two specific sites, one in the kinase domain (Thr-256) and the other in the C-terminal regulatory region (Ser-422), need to be phosphorylated for its full activation. Phosphorylation at Ser-397 and Ser-401 are also essential for its activity. Activated by WNK1, WNK2, WNK3 and WNK4; which promote phosphorylation by mTORC2. In terms of biological role, serine/threonine-protein kinase which is involved in the regulation of a wide variety of ion channels, membrane transporters, cellular enzymes, transcription factors, neuronal excitability, cell growth, proliferation, survival, migration and apoptosis. Plays an important role in cellular stress response. Contributes to regulation of renal Na(+) retention, renal K(+) elimination, salt appetite, gastric acid secretion, intestinal Na(+)/H(+) exchange and nutrient transport, insulin-dependent salt sensitivity of blood pressure, salt sensitivity of peripheral glucose uptake, cardiac repolarization and memory consolidation. Up-regulates Na(+) channels: SCNN1A/ENAC, SCN5A and ASIC1/ACCN2, K(+) channels: KCNJ1/ROMK1, KCNA1-5, KCNQ1-5 and KCNE1, epithelial Ca(2+) channels: TRPV5 and TRPV6, chloride channels: BSND, CLCN2 and CFTR, glutamate transporters: SLC1A3/EAAT1, SLC1A2 /EAAT2, SLC1A1/EAAT3, SLC1A6/EAAT4 and SLC1A7/EAAT5, amino acid transporters: SLC1A5/ASCT2, SLC38A1/SN1 and SLC6A19, creatine transporter: SLC6A8, Na(+)/dicarboxylate cotransporter: SLC13A2/NADC1, Na(+)-dependent phosphate cotransporter: SLC34A2/NAPI-2B, glutamate receptor: GRIK2/GLUR6. Up-regulates carriers: SLC9A3/NHE3, SLC12A1/NKCC2, SLC12A3/NCC, SLC5A3/SMIT, SLC2A1/GLUT1, SLC5A1/SGLT1 and SLC15A2/PEPT2. Regulates enzymes: GSK3A/B, PMM2 and Na(+)/K(+) ATPase, and transcription factors: CTNNB1 and nuclear factor NF-kappa-B. Stimulates sodium transport into epithelial cells by enhancing the stability and expression of SCNN1A/ENAC. This is achieved by phosphorylating the NEDD4L ubiquitin E3 ligase, promoting its interaction with 14-3-3 proteins, thereby preventing it from binding to SCNN1A/ENAC and targeting it for degradation. Regulates store-operated Ca(+2) entry (SOCE) by stimulating ORAI1 and STIM1. Regulates KCNJ1/ROMK1 directly via its phosphorylation or indirectly via increased interaction with SLC9A3R2/NHERF2. Phosphorylates MDM2 and activates MDM2-dependent ubiquitination of p53/TP53. Phosphorylates MAPT/TAU and mediates microtubule depolymerization and neurite formation in hippocampal neurons. Phosphorylates SLC2A4/GLUT4 and up-regulates its activity. Phosphorylates APBB1/FE65 and promotes its localization to the nucleus. Phosphorylates MAPK1/ERK2 and activates it by enhancing its interaction with MAP2K1/MEK1 and MAP2K2/MEK2. Phosphorylates FBXW7 and plays an inhibitory role in the NOTCH1 signaling. Phosphorylates FOXO1 resulting in its relocalization from the nucleus to the cytoplasm. Phosphorylates FOXO3, promoting its exit from the nucleus and interference with FOXO3-dependent transcription. Phosphorylates BRAF and MAP3K3/MEKK3 and inhibits their activity. Phosphorylates SLC9A3/NHE3 in response to dexamethasone, resulting in its activation and increased localization at the cell membrane. Phosphorylates CREB1. Necessary for vascular remodeling during angiogenesis. The protein is Serine/threonine-protein kinase Sgk1 (Sgk1) of Mus musculus (Mouse).